The chain runs to 412 residues: WW domain-containing oxidoreductase (412 aa).

Positions M1 to E24 are disordered. Residues D16–T49 form the WW 1 domain. A Nuclear localization signal motif is present at residues G50–C55. Residues G57–Q90 enclose the WW 2 domain. Position 128 to 134 (G128 to G134) interacts with NADP(+). Substrate is bound at residue S257. Y290 (proton acceptor) is an active-site residue.

The protein belongs to the short-chain dehydrogenases/reductases (SDR) family.

It is found in the cytoplasm. It localises to the mitochondrion. Its subcellular location is the golgi apparatus. The protein localises to the lysosome. Functionally, putative oxidoreductase. Acts as a tumor suppressor and plays a role in apoptosis. May function synergistically with p53/TP53 to control genotoxic stress-induced cell death. Plays a role in TGFB1 signaling and TGFB1-mediated cell death. May also play a role in tumor necrosis factor (TNF)-mediated cell death. Required for normal bone development. Inhibits Wnt signaling. The sequence is that of WW domain-containing oxidoreductase (wwox) from Danio rerio (Zebrafish).